Consider the following 469-residue polypeptide: Argininosuccinate lyase (469 aa).

Belongs to the lyase 1 family. Argininosuccinate lyase subfamily.

The protein localises to the cytoplasm. It catalyses the reaction 2-(N(omega)-L-arginino)succinate = fumarate + L-arginine. The protein operates within amino-acid biosynthesis; L-arginine biosynthesis; L-arginine from L-ornithine and carbamoyl phosphate: step 3/3. This chain is Argininosuccinate lyase, found in Burkholderia mallei (strain NCTC 10247).